The chain runs to 710 residues: MSMEKTFNLARRDDGIAILTMDVPGETMNTLKEQFGPEISEILTEIKADSSIKGLVVISGKADSFVAGADITMLAACKNEEQAKTLSQQGHVVFAELEGLSIPVVAAINGACLGGGLELALACHLRVCSDDKKTMLGVPEVQLGLLPGGGGTQRLPRLVGITTALDMMLTGKQIRPKQALKMGLVNDVVPNSILLETAVELAKKGKQAAKPVVQSKINQFLESTSFTRDIIFDQARKQVLKKTQGNYPAPAKIIDCVRQGMNKGMVKGLEVEATHFANLVMSKESAALRSLFFATTEMKKETGAEGAVPRKVKKVMVLGGGLMGGGIASVTTTKAKIPARVKDISEQGLSNALSYAYKLLDKGVKRRHMTPIARDNIMALMTTTTEYTGIKDADIVVEAVFEDLALKHKMVQDVERECGENTIFASNTSSLPIGQIAAAASRPENVIGLHYFSPVEKMPLVEVIAHKTTSPETIATTVAFARKQGKTPIVVQDGAGFYVNRILALYMNEAAQLLLEGQRIEHLDRALVKFGFPVGPMTLLDEVGIDVGAKISPILEKELGDRFKAPAAFDKLLADDRKGRKNGKGFYQYGPKAKKAKLVDESVYKVLDILIASDKEAKGVAERCTIQMLNEAVRCLEEGIIASARDGDIGAIFGIGFPPFLGGPFRYIDTLGASNLVATLQGYQSLYGDRFAPCDTLVKMASDGSQFYKK.

The enoyl-CoA hydratase stretch occupies residues 1-190 (MSMEKTFNLA…KMGLVNDVVP (190 aa)). Residues 310–710 (RKVKKVMVLG…ASDGSQFYKK (401 aa)) are 3-hydroxyacyl-CoA dehydrogenase.

The protein in the N-terminal section; belongs to the enoyl-CoA hydratase/isomerase family. It in the central section; belongs to the 3-hydroxyacyl-CoA dehydrogenase family. Heterotetramer of two alpha chains (FadJ) and two beta chains (FadI).

Its subcellular location is the cytoplasm. The catalysed reaction is a (3S)-3-hydroxyacyl-CoA = a (2E)-enoyl-CoA + H2O. It catalyses the reaction a 4-saturated-(3S)-3-hydroxyacyl-CoA = a (3E)-enoyl-CoA + H2O. It carries out the reaction a (3S)-3-hydroxyacyl-CoA + NAD(+) = a 3-oxoacyl-CoA + NADH + H(+). The enzyme catalyses (3S)-3-hydroxybutanoyl-CoA = (3R)-3-hydroxybutanoyl-CoA. Its pathway is lipid metabolism; fatty acid beta-oxidation. Catalyzes the formation of a hydroxyacyl-CoA by addition of water on enoyl-CoA. Also exhibits 3-hydroxyacyl-CoA epimerase and 3-hydroxyacyl-CoA dehydrogenase activities. The polypeptide is Fatty acid oxidation complex subunit alpha (Shewanella frigidimarina (strain NCIMB 400)).